A 544-amino-acid chain; its full sequence is E3 ubiquitin-protein ligase makorin-3 (544 aa).

2 disordered regions span residues Met1–Ala46 and Asp117–Thr144. Composition is skewed to low complexity over residues Glu9–Gly19 and Ala36–Ala46. C3H1-type zinc fingers lie at residues Trp92–Ser119 and Pro274–Ile301. A makorin-type Cys-His region spans residues Cys302–His329. An RING-type zinc finger spans residues Cys347–Arg401. The C3H1-type 3 zinc finger occupies Gly430–Pro459.

In terms of tissue distribution, mainly expressed in mouse brain and reproductive system including testis and ovary. Ubiquitously detected at low levels throughout the entire embryo, but expression is highest in the ventricular layers of the brain.

The protein resides in the nucleus. The catalysed reaction is S-ubiquitinyl-[E2 ubiquitin-conjugating enzyme]-L-cysteine + [acceptor protein]-L-lysine = [E2 ubiquitin-conjugating enzyme]-L-cysteine + N(6)-ubiquitinyl-[acceptor protein]-L-lysine.. It functions in the pathway protein modification; protein ubiquitination. Functionally, E3 ubiquitin ligase catalyzing the covalent attachment of ubiquitin moieties onto substrate proteins. Acts as a key developmental timer that helps ensure puberty begins at the appropriate age, by inhibiting premature activation of the reproductive hormone cascade. Epigenetically regulates GNRH1 transcription by disrupting the binding of methyl-DNA binding protein 3/MBD3 to the promoter of GNRH1. Mechanistically, mediates the non-proteolytic ubiquitination of MBD3 at multiple sites with 'Lys27' ubiquitin linkages and thereby regulates the methylation status of the genome, including GNRH1 promoter. Modulates the stability and translation of GNRH1 mRNA by mediating the non-proteolytic ubiquitination of PABP family members PABPC1, PABPC3 and PABPC4 at multiple sites. Also participates in the maintenance of genomic and epigenomic stability by regulating the abundance of APEX2 via 'Lys-48'-linked ubiquitination. The sequence is that of E3 ubiquitin-protein ligase makorin-3 (Mkrn3) from Mus musculus (Mouse).